Reading from the N-terminus, the 184-residue chain is Peptidyl-tRNA hydrolase (184 aa).

Tyrosine 13 contacts tRNA. Histidine 18 acts as the Proton acceptor in catalysis. TRNA-binding residues include phenylalanine 59, asparagine 61, and asparagine 105.

This sequence belongs to the PTH family. In terms of assembly, monomer.

It is found in the cytoplasm. It catalyses the reaction an N-acyl-L-alpha-aminoacyl-tRNA + H2O = an N-acyl-L-amino acid + a tRNA + H(+). Hydrolyzes ribosome-free peptidyl-tRNAs (with 1 or more amino acids incorporated), which drop off the ribosome during protein synthesis, or as a result of ribosome stalling. Functionally, catalyzes the release of premature peptidyl moieties from peptidyl-tRNA molecules trapped in stalled 50S ribosomal subunits, and thus maintains levels of free tRNAs and 50S ribosomes. The chain is Peptidyl-tRNA hydrolase from Sulfurimonas denitrificans (strain ATCC 33889 / DSM 1251) (Thiomicrospira denitrificans (strain ATCC 33889 / DSM 1251)).